The chain runs to 278 residues: 1-acyl-sn-glycerol-3-phosphate acyltransferase beta (278 aa).

Residues 1 to 23 (MELWPCLAAALLLLLLLVQLSRA) form the signal peptide. The Lumenal portion of the chain corresponds to 24–29 (AEFYAK). Residues 30–50 (VALYCALCFTVSAVASLVCLL) traverse the membrane as a helical segment. Residues 51 to 121 (RHGGRTVENM…PERCVQIAKR (71 aa)) lie on the Cytoplasmic side of the membrane. The short motif at 98 to 103 (HQSILD) is the HXXXXD motif element. The helical transmembrane segment at 122–142 (ELLFLGPVGLIMYLGGVFFIN) threads the bilayer. Topologically, residues 143-278 (RQRSSTAMTV…TAGSGVQPAQ (136 aa)) are lumenal. The EGTR motif signature appears at 172 to 175 (EGTR).

This sequence belongs to the 1-acyl-sn-glycerol-3-phosphate acyltransferase family. In terms of tissue distribution, expressed predominantly in adipose tissue, pancreas and liver.

It is found in the endoplasmic reticulum membrane. The enzyme catalyses a 1-acyl-sn-glycero-3-phosphate + an acyl-CoA = a 1,2-diacyl-sn-glycero-3-phosphate + CoA. It carries out the reaction 1-(9Z-octadecenoyl)-sn-glycero-3-phosphate + (9Z)-octadecenoyl-CoA = 1,2-di-(9Z-octadecenoyl)-sn-glycero-3-phosphate + CoA. The catalysed reaction is 1-(9Z-octadecenoyl)-sn-glycero-3-phosphate + hexadecanoyl-CoA = 1-(9Z)-octadecenoyl-2-hexadecanoyl-sn-glycero-3-phosphate + CoA. It catalyses the reaction heptadecanoyl-CoA + 1-(9Z-octadecenoyl)-sn-glycero-3-phosphate = 1-(9Z)-octadecenoyl-2-heptadecanoyl-sn-glycero-3-phosphate + CoA. The enzyme catalyses 1-(9Z-octadecenoyl)-sn-glycero-3-phosphate + (9Z,12Z)-octadecadienoyl-CoA = 1-(9Z)-octadecenoyl-2-(9Z,12Z)-octadecadienoyl-sn-glycero-3-phosphate + CoA. It carries out the reaction 1-(9Z-octadecenoyl)-sn-glycero-3-phosphate + tetradecanoyl-CoA = 1-(9Z)-octadecenoyl-2-tetradecanoyl-sn-glycero-3-phosphate + CoA. The catalysed reaction is pentadecanoyl-CoA + 1-(9Z-octadecenoyl)-sn-glycero-3-phosphate = 1-(9Z)-octadecenoyl-2-pentadecanoyl-sn-glycero-3-phosphate + CoA. It catalyses the reaction 1-hexadecanoyl-sn-glycero-3-phosphate + (9Z)-octadecenoyl-CoA = 1-hexadecanoyl-2-(9Z-octadecenoyl)-sn-glycero-3-phosphate + CoA. The enzyme catalyses 1-tetradecanoyl-sn-glycerol 3-phosphate + (9Z)-octadecenoyl-CoA = 1-tetradecanoyl-2-(9Z)-octadecenoyl-sn-glycero-3-phosphate + CoA. It carries out the reaction 1-(9Z,12Z,15Z)-octadecatrienoyl-sn-glycero-3-phosphate + (9Z)-octadecenoyl-CoA = 1-(9Z,12Z,15Z)-octadecatrienoyl-2-(9Z)-octadecenoyl-sn-glycero-3-phosphate + CoA. The catalysed reaction is 1-(6Z,9Z,12Z-octadecatrienoyl)-sn-glycero-3-phosphate + (9Z)-octadecenoyl-CoA = (6Z,9Z,12Z)-octadecatrienoyl-2-(9Z)-octadecenoyl-sn-glycero-3-phosphate + CoA. It catalyses the reaction 1-eicosanoyl-sn-glycero-3-phosphate + (9Z)-octadecenoyl-CoA = 1-eicosanoyl-2-(9Z)-octadecenoyl-sn-glycero-3-phosphate + CoA. The enzyme catalyses 1-hexadecanoyl-sn-glycero-3-phosphate + octadecanoyl-CoA = 1-hexadecanoyl-2-octadecanoyl-sn-glycero-3-phosphate + CoA. It carries out the reaction 1-hexadecanoyl-sn-glycero-3-phosphate + (5Z,8Z,11Z,14Z)-eicosatetraenoyl-CoA = 1-hexadecanoyl-2-(5Z,8Z,11Z,14Z-eicosatetraenoyl)-sn-glycero-3-phosphate + CoA. The catalysed reaction is 1-hexadecanoyl-sn-glycero-3-phosphate + hexadecanoyl-CoA = 1,2-dihexadecanoyl-sn-glycero-3-phosphate + CoA. It catalyses the reaction 1-hexadecanoyl-sn-glycero-3-phosphate + tetradecanoyl-CoA = 1-hexadecanoyl-2-tetradecanoyl-sn-glycero-3-phosphate + CoA. The enzyme catalyses (11Z)-octadecenoyl-CoA + 1-(9Z-octadecenoyl)-sn-glycero-3-phosphate = 1-(9Z)-octadecenoyl-2-(11Z)-octadecenoyl-sn-glycero-3-phosphate + CoA. The protein operates within phospholipid metabolism; CDP-diacylglycerol biosynthesis; CDP-diacylglycerol from sn-glycerol 3-phosphate: step 2/3. Converts 1-acyl-sn-glycerol-3-phosphate (lysophosphatidic acid or LPA) into 1,2-diacyl-sn-glycerol-3-phosphate (phosphatidic acid or PA) by incorporating an acyl moiety at the sn-2 position of the glycerol backbone. This Homo sapiens (Human) protein is 1-acyl-sn-glycerol-3-phosphate acyltransferase beta (AGPAT2).